The following is a 133-amino-acid chain: Complexin-1 (133 aa).

Disordered stretches follow at residues 1 to 40 (MDFVMKQALGGATKDMGKMLGGDEEKDPDAEKKEEERLEA) and 85 to 112 (AMEAQAEGSLTRPKKAIPAGCGDEDEEE). The span at 15-40 (DMGKMLGGDEEKDPDAEKKEEERLEA) shows a compositional bias: basic and acidic residues. Residues 28 to 60 (PDAEKKEEERLEALRQAEEERAGKYAKMEAERE) adopt a coiled-coil conformation.

The protein belongs to the complexin/synaphin family. As to quaternary structure, binds to the SNARE core complex containing SNAP25, VAMP2 and syntaxin-1. As to expression, nervous system. Present in electric organ (at protein level).

It is found in the cytoplasm. The protein resides in the cytosol. In terms of biological role, positively regulates a late step in synaptic vesicle exocytosis. The chain is Complexin-1 from Narke japonica (Japanese sleeper ray).